The sequence spans 383 residues: S-adenosylmethionine synthase (383 aa).

H15 lines the ATP pocket. D17 serves as a coordination point for Mg(2+). E43 serves as a coordination point for K(+). The L-methionine site is built by E56 and Q99. The segment at 99–109 (QSPDINQGVDR) is flexible loop. ATP-binding positions include 164–166 (DAK), 230–231 (RF), D239, 245–246 (RK), A262, and K266. L-methionine is bound at residue D239. K270 is a binding site for L-methionine.

The protein belongs to the AdoMet synthase family. In terms of assembly, homotetramer; dimer of dimers. Requires Mg(2+) as cofactor. It depends on K(+) as a cofactor.

It is found in the cytoplasm. It catalyses the reaction L-methionine + ATP + H2O = S-adenosyl-L-methionine + phosphate + diphosphate. The protein operates within amino-acid biosynthesis; S-adenosyl-L-methionine biosynthesis; S-adenosyl-L-methionine from L-methionine: step 1/1. Its function is as follows. Catalyzes the formation of S-adenosylmethionine (AdoMet) from methionine and ATP. The overall synthetic reaction is composed of two sequential steps, AdoMet formation and the subsequent tripolyphosphate hydrolysis which occurs prior to release of AdoMet from the enzyme. In Actinobacillus pleuropneumoniae serotype 7 (strain AP76), this protein is S-adenosylmethionine synthase.